A 702-amino-acid polypeptide reads, in one-letter code: Phosphoglycerol transferase I (702 aa).

The next 3 membrane-spanning stretches (helical) occupy residues 2-22 (HWML…SPRL), 71-91 (FSGY…PLLL), and 103-123 (GGAV…ASPL).

This sequence belongs to the OpgB family.

Its subcellular location is the cell inner membrane. It carries out the reaction a phosphatidylglycerol + a membrane-derived-oligosaccharide D-glucose = a 1,2-diacyl-sn-glycerol + a membrane-derived-oligosaccharide 6-(glycerophospho)-D-glucose.. It participates in glycan metabolism; osmoregulated periplasmic glucan (OPG) biosynthesis. Functionally, transfers a phosphoglycerol residue from phosphatidylglycerol to the membrane-bound nascent glucan backbones. The sequence is that of Phosphoglycerol transferase I from Xanthomonas euvesicatoria pv. vesicatoria (strain 85-10) (Xanthomonas campestris pv. vesicatoria).